The chain runs to 859 residues: Fanconi anemia group B protein (859 aa).

Residue T2 is modified to N-acetylthreonine.

Belongs to the multisubunit FA complex composed of FANCA, FANCB, FANCC, FANCE, FANCF, FANCG, FANCL/PHF9 and FANCM. The complex is not found in FA patients.

The protein localises to the nucleus. Functionally, DNA repair protein required for FANCD2 ubiquitination. The chain is Fanconi anemia group B protein (FANCB) from Homo sapiens (Human).